The chain runs to 603 residues: Pyruvate decarboxylase 4 (603 aa).

The substrate site is built by Asp65 and His152. Residues 430 to 512 (DSWFNCQKLK…FLINNGGYTI (83 aa)) form a thiamine pyrophosphate binding region. Mg(2+)-binding residues include Asp480, Asn507, and Gly509. Residue Glu513 participates in substrate binding.

It belongs to the TPP enzyme family. In terms of assembly, homotetramer. The cofactor is a metal cation. Thiamine diphosphate serves as cofactor. In terms of tissue distribution, expressed in shoots and at lowe levels in roots, flowers and siliques.

It carries out the reaction a 2-oxocarboxylate + H(+) = an aldehyde + CO2. The polypeptide is Pyruvate decarboxylase 4 (PDC4) (Arabidopsis thaliana (Mouse-ear cress)).